A 406-amino-acid polypeptide reads, in one-letter code: Argininosuccinate synthase (406 aa).

ATP-binding positions include 13 to 21 (AYSGGLDTS) and alanine 40. 2 residues coordinate L-citrulline: tyrosine 91 and serine 96. An ATP-binding site is contributed by glycine 121. Residues threonine 123, asparagine 127, and aspartate 128 each contribute to the L-aspartate site. Asparagine 127 contacts L-citrulline. Positions 131, 182, 191, 267, and 279 each coordinate L-citrulline.

The protein belongs to the argininosuccinate synthase family. Type 1 subfamily. As to quaternary structure, homotetramer.

It localises to the cytoplasm. The catalysed reaction is L-citrulline + L-aspartate + ATP = 2-(N(omega)-L-arginino)succinate + AMP + diphosphate + H(+). It functions in the pathway amino-acid biosynthesis; L-arginine biosynthesis; L-arginine from L-ornithine and carbamoyl phosphate: step 2/3. This chain is Argininosuccinate synthase, found in Brucella abortus (strain S19).